Here is a 78-residue protein sequence, read N- to C-terminus: Putative membrane protein insertion efficiency factor (78 aa).

Belongs to the UPF0161 family.

The protein localises to the cell membrane. In terms of biological role, could be involved in insertion of integral membrane proteins into the membrane. In Bacillus thuringiensis subsp. konkukian (strain 97-27), this protein is Putative membrane protein insertion efficiency factor.